A 592-amino-acid chain; its full sequence is A-type ATP synthase subunit A (592 aa).

233–240 (GPFGSGKT) provides a ligand contact to ATP.

It belongs to the ATPase alpha/beta chains family. Has multiple subunits with at least A(3), B(3), C, D, E, F, H, I and proteolipid K(x).

Its subcellular location is the cell membrane. The enzyme catalyses ATP + H2O + 4 H(+)(in) = ADP + phosphate + 5 H(+)(out). Functionally, component of the A-type ATP synthase that produces ATP from ADP in the presence of a proton gradient across the membrane. The A chain is the catalytic subunit. The protein is A-type ATP synthase subunit A of Saccharolobus islandicus (strain M.16.27) (Sulfolobus islandicus).